Reading from the N-terminus, the 456-residue chain is tRNA modification GTPase MnmE (456 aa).

Residues R24, E81, and K120 each contribute to the (6S)-5-formyl-5,6,7,8-tetrahydrofolate site. In terms of domain architecture, TrmE-type G spans 216-379 (GMTVVIAGRP…LRDHLKACMG (164 aa)). A K(+)-binding site is contributed by N226. GTP contacts are provided by residues 226 to 231 (NAGKSS), 245 to 251 (TEIAGTT), 270 to 273 (DTAG), and 335 to 338 (NKAD). A Mg(2+)-binding site is contributed by S230. The K(+) site is built by T245, I247, and T250. Residue T251 participates in Mg(2+) binding. K456 contributes to the (6S)-5-formyl-5,6,7,8-tetrahydrofolate binding site.

It belongs to the TRAFAC class TrmE-Era-EngA-EngB-Septin-like GTPase superfamily. TrmE GTPase family. As to quaternary structure, homodimer. Heterotetramer of two MnmE and two MnmG subunits. Requires K(+) as cofactor.

The protein localises to the cytoplasm. Functionally, exhibits a very high intrinsic GTPase hydrolysis rate. Involved in the addition of a carboxymethylaminomethyl (cmnm) group at the wobble position (U34) of certain tRNAs, forming tRNA-cmnm(5)s(2)U34. This Pseudomonas fluorescens (strain Pf0-1) protein is tRNA modification GTPase MnmE.